Reading from the N-terminus, the 225-residue chain is Glutathione S-transferase Mu 3 (225 aa).

In terms of domain architecture, GST N-terminal spans 5-92; it reads SSMVLGYWDI…YIARKHNMCG (88 aa). Glutathione contacts are provided by residues 11 to 12, 50 to 54, and 63 to 64; these read YW, WLDVK, and NL. Residue Lys-54 forms a Glycyl lysine isopeptide (Lys-Gly) (interchain with G-Cter in SUMO2) linkage. Lys-73 participates in a covalent cross-link: Glycyl lysine isopeptide (Lys-Gly) (interchain with G-Cter in SUMO2). 76 to 77 provides a ligand contact to glutathione; that stretch reads QS. Positions 94-212 constitute a GST C-terminal domain; sequence TEEEKIRVDI…QSDQFFKMPI (119 aa). Tyr-120 is a binding site for substrate.

Belongs to the GST superfamily. Mu family. In terms of assembly, homodimer.

It localises to the cytoplasm. The enzyme catalyses RX + glutathione = an S-substituted glutathione + a halide anion + H(+). Conjugation of reduced glutathione to a wide number of exogenous and endogenous hydrophobic electrophiles. May govern uptake and detoxification of both endogenous compounds and xenobiotics at the testis and brain blood barriers. This is Glutathione S-transferase Mu 3 (GSTM3) from Macaca fuscata fuscata (Japanese macaque).